Here is a 213-residue protein sequence, read N- to C-terminus: Bacteriochlorophyll synthase 23 kDa chain (213 aa).

The protein operates within porphyrin-containing compound metabolism; bacteriochlorophyll biosynthesis (light-independent). This chain is Bacteriochlorophyll synthase 23 kDa chain (bchJ), found in Rhodobacter capsulatus (strain ATCC BAA-309 / NBRC 16581 / SB1003).